Here is a 185-residue protein sequence, read N- to C-terminus: MKNFEQVLKALQTGEVIAYPTEGVFGVGCDPDNPEAIQKLLELKQRPVEKGLILIAASYEQLLPYIDESQLTQEQLDQVHATWPGPYTWIMPASDKVSHWVSGQFDSIAVRVTDHPLVQKMCNAFGKPLTSTSANLTGQPPCMTTEEVEEQLGDRLVAILRGETSGRNKPSEIRDAKTSQILRQG.

Positions 1–185 (MKNFEQVLKA…AKTSQILRQG (185 aa)) constitute a YrdC-like domain. Positions 163–185 (ETSGRNKPSEIRDAKTSQILRQG) are disordered. The span at 164–177 (TSGRNKPSEIRDAK) shows a compositional bias: basic and acidic residues.

The protein belongs to the SUA5 family. TsaC subfamily.

The protein resides in the cytoplasm. The catalysed reaction is L-threonine + hydrogencarbonate + ATP = L-threonylcarbamoyladenylate + diphosphate + H2O. Its function is as follows. Required for the formation of a threonylcarbamoyl group on adenosine at position 37 (t(6)A37) in tRNAs that read codons beginning with adenine. Catalyzes the conversion of L-threonine, HCO(3)(-)/CO(2) and ATP to give threonylcarbamoyl-AMP (TC-AMP) as the acyladenylate intermediate, with the release of diphosphate. The sequence is that of Threonylcarbamoyl-AMP synthase from Vibrio campbellii (strain ATCC BAA-1116).